We begin with the raw amino-acid sequence, 91 residues long: Putative membrane protein insertion efficiency factor (91 aa).

The disordered stretch occupies residues 72–91; sequence SGGNDPVPEKLTHINHQHEK. Positions 78–91 are enriched in basic and acidic residues; it reads VPEKLTHINHQHEK.

This sequence belongs to the UPF0161 family.

It is found in the cell inner membrane. Its function is as follows. Could be involved in insertion of integral membrane proteins into the membrane. This Pseudoalteromonas translucida (strain TAC 125) protein is Putative membrane protein insertion efficiency factor.